The chain runs to 194 residues: dITP/XTP pyrophosphatase (194 aa).

Residue 8–13 coordinates substrate; that stretch reads TKNKGK. Positions 41 and 70 each coordinate Mg(2+). The active-site Proton acceptor is Asp-70. Residues Ser-71, 153–156, Lys-176, and 181–182 contribute to the substrate site; these read FGYD and HR.

This sequence belongs to the HAM1 NTPase family. In terms of assembly, homodimer. It depends on Mg(2+) as a cofactor.

The catalysed reaction is XTP + H2O = XMP + diphosphate + H(+). It carries out the reaction dITP + H2O = dIMP + diphosphate + H(+). The enzyme catalyses ITP + H2O = IMP + diphosphate + H(+). Its function is as follows. Pyrophosphatase that catalyzes the hydrolysis of nucleoside triphosphates to their monophosphate derivatives, with a high preference for the non-canonical purine nucleotides XTP (xanthosine triphosphate), dITP (deoxyinosine triphosphate) and ITP. Seems to function as a house-cleaning enzyme that removes non-canonical purine nucleotides from the nucleotide pool, thus preventing their incorporation into DNA/RNA and avoiding chromosomal lesions. This Halalkalibacterium halodurans (strain ATCC BAA-125 / DSM 18197 / FERM 7344 / JCM 9153 / C-125) (Bacillus halodurans) protein is dITP/XTP pyrophosphatase.